The chain runs to 2223 residues: Voltage-dependent T-type calcium channel subunit alpha-1I (2223 aa).

Residues 1–19 (MAESASPPSSSAAAPAAEP) are compositionally biased toward low complexity. The segment at 1-46 (MAESASPPSSSAAAPAAEPGVTTEQPGPRSPPSSPPGLEEPLDGAD) is disordered. Residues 1 to 78 (MAESASPPSS…RNWCIKMVCN (78 aa)) are Cytoplasmic-facing. Residues 66–401 (TSPRNWCIKM…LCLVVIATQF (336 aa)) form an I repeat. A helical membrane pass occupies residues 79–99 (PWFECVSMLVILLNCVTLGMY). The Extracellular segment spans residues 100–120 (QPCDDMDCLSDRCKILQVFDD). The helical transmembrane segment at 121-141 (FIFIFFAMEMVLKMVALGIFG) threads the bilayer. At 142 to 148 (KKCYLGD) the chain is on the cytoplasmic side. The helical transmembrane segment at 149-168 (TWNRLDFFIVMAGMVEYSLD) threads the bilayer. The Extracellular portion of the chain corresponds to 169–173 (LQNIN). An N-linked (GlcNAc...) asparagine glycan is attached at asparagine 173. The helical transmembrane segment at 174–191 (LSAIRTVRVLRPLKAINR) threads the bilayer. Topologically, residues 192–211 (VPSMRILVNLLLDTLPMLGN) are cytoplasmic. The helical transmembrane segment at 212–232 (VLLLCFFVFFIFGIIGVQLWA) threads the bilayer. Residues 233-377 (GLLRNRCFLE…DAHSFYNFIY (145 aa)) lie on the Extracellular side of the membrane. 2 N-linked (GlcNAc...) asparagine glycosylation sites follow: asparagine 244 and asparagine 311. Residues 378–398 (FILLIIVGSFFMINLCLVVIA) traverse the membrane as a helical segment. Over 399–640 (TQFSETKQRE…AKLRGIVDSK (242 aa)) the chain is Cytoplasmic. Disordered stretches follow at residues 467-536 (LGPE…ATPH) and 555-616 (CCQH…EQAD). One copy of the II repeat lies at 626–865 (WRETRAKLRG…LLVAILVEGF (240 aa)). A helical transmembrane segment spans residues 641-661 (YFNRGIMMAILVNTVSMGIEH). At 662–676 (HEQPEELTNILEICN) the chain is on the extracellular side. A helical membrane pass occupies residues 677-697 (VVFTSMFALEMILKLAAFGLF). The Cytoplasmic segment spans residues 698–702 (DYLRN). Residues 703–721 (PYNIFDSIIVIISIWEIVG) traverse the membrane as a helical segment. Residues 722 to 729 (QADGGLSV) are Extracellular-facing. Residues 730–753 (LRTFRLLRVLKLVRFMPALRRQLV) form a helical membrane-spanning segment. Over 754 to 764 (VLMKTMDNVAT) the chain is Cytoplasmic. Residues 765–785 (FCMLLMLFIFIFSILGMHIFG) traverse the membrane as a helical segment. Topologically, residues 786-841 (CKFSLRTDTGDTVPDRKNFDSLLWAIVTVFQILTQEDWNVVLYNGMASTSPWASLY) are extracellular. The helical transmembrane segment at 842–862 (FVALMTFGNYVLFNLLVAILV) threads the bilayer. The Cytoplasmic portion of the chain corresponds to 863–1166 (EGFQAEGDAN…NRFRVLCQTI (304 aa)). The disordered stretch occupies residues 899–936 (GDPKLCPIPMTPNGHLDPSLPLGGHLGPAGAAGPAPRL). The span at 912-936 (GHLDPSLPLGGHLGPAGAAGPAPRL) shows a compositional bias: low complexity. A Phosphoserine modification is found at serine 1058. One copy of the III repeat lies at 1157–1434 (NRFRVLCQTI…MFVGVVVENF (278 aa)). The chain crosses the membrane as a helical span at residues 1167-1187 (IAHKLFDYVVLAFIFLNCITI). The Extracellular portion of the chain corresponds to 1188–1209 (ALERPQIEAGSTERIFLTVSNY). A helical membrane pass occupies residues 1210–1230 (IFTAIFVGEMTLKVVSLGLYF). The Cytoplasmic segment spans residues 1231-1244 (GEQAYLRSSWNVLD). A helical membrane pass occupies residues 1245 to 1265 (GFLVFVSIIDIVVSLASAGGA). Residues 1266–1272 (KILGVLR) are Extracellular-facing. Residues 1273 to 1294 (VLRLLRTLRPLRVISRAPGLKL) traverse the membrane as a helical segment. At 1295-1304 (VVETLISSLK) the chain is on the cytoplasmic side. The helical transmembrane segment at 1305 to 1325 (PIGNIVLICCAFFIIFGILGV) threads the bilayer. At 1326–1410 (QLFKGKFYHC…TNHNPWMLLY (85 aa)) the chain is on the extracellular side. 2 N-linked (GlcNAc...) asparagine glycosylation sites follow: asparagine 1342 and asparagine 1345. The chain crosses the membrane as a helical span at residues 1411–1431 (FISFLLIVSFFVLNMFVGVVV). The Cytoplasmic portion of the chain corresponds to 1432 to 1485 (ENFHKCRQHQEAEEARRREEKRLRRLEKKRRKAQRLPYYATYCHTRLLIHSMCT). An IV repeat occupies 1472–1733 (TYCHTRLLIH…VVVAVLMKHL (262 aa)). The helical transmembrane segment at 1486–1506 (SHYLDIFITFIICLNVVTMSL) threads the bilayer. The Extracellular portion of the chain corresponds to 1507–1522 (EHYNQPTSLETALKYC). A helical membrane pass occupies residues 1523–1543 (NYMFTTVFVLEAVLKLVAFGL). The Cytoplasmic segment spans residues 1544-1556 (RRFFKDRWNQLDL). A helical membrane pass occupies residues 1557-1577 (AIVLLSVMGITLEEIEINAAL). At 1578-1583 (PINPTI) the chain is on the extracellular side. The chain crosses the membrane as a helical span at residues 1584-1607 (IRIMRVLRIARVLKLLKMATGMRA). Topologically, residues 1608–1621 (LLDTVVQALPQVGN) are cytoplasmic. A helical membrane pass occupies residues 1622 to 1642 (LGLLFMLLFFIYAALGVELFG). At 1643 to 1709 (KLVCNDENPC…SSLQFVSPLY (67 aa)) the chain is on the extracellular side. Residues 1710–1730 (FVSFVLTAQFVLINVVVAVLM) form a helical membrane-spanning segment. The Cytoplasmic segment spans residues 1731–2223 (KHLDDSNKEA…PGDAASKRKR (493 aa)). Disordered regions lie at residues 1758-1784 (LGPG…GGGD), 1868-1897 (LGDD…PEPM), 1937-1960 (LKHD…LLPM), 2013-2062 (SDTS…LSPA), and 2076-2223 (SLRG…KRKR). The span at 1770 to 1784 (GAPGRGPGGAGGGGD) shows a compositional bias: gly residues. Residues 2013 to 2028 (SDTSLDASPSSSAGSL) are compositionally biased toward low complexity. Polar residues-rich tracts occupy residues 2029-2040 (QTTLEDSLTLSD) and 2087-2096 (HSSGGSTSPG). Basic and acidic residues predominate over residues 2098–2111 (THHDSMDPSDEEGR). A compositionally biased stretch (low complexity) spans 2126–2136 (TLSSLSLTSLF). Pro residues predominate over residues 2137-2146 (CPPPPPPAPG). Residues 2160 to 2176 (AAPGRPHAAALAHGLAR) are compositionally biased toward low complexity.

It belongs to the calcium channel alpha-1 subunit (TC 1.A.1.11) family. CACNA1I subfamily. In terms of assembly, interacts with CATSPER1 and CATSPER2, leading to suppress T-type calcium channel activity. In terms of processing, in response to raising of intracellular calcium, the T-type channels are activated by CaM-kinase II. As to expression, brain specific.

The protein resides in the membrane. The catalysed reaction is Ca(2+)(in) = Ca(2+)(out). Voltage-sensitive calcium channels (VSCC) mediate the entry of calcium ions into excitable cells and are also involved in a variety of calcium-dependent processes, including muscle contraction, hormone or neurotransmitter release, gene expression, cell motility, cell division and cell death. This channel gives rise to T-type calcium currents. T-type calcium channels belong to the 'low-voltage activated (LVA)' group and are strongly blocked by nickel and mibefradil. A particularity of this type of channels is an opening at quite negative potentials, and a voltage-dependent inactivation. T-type channels serve pacemaking functions in both central neurons and cardiac nodal cells and support calcium signaling in secretory cells and vascular smooth muscle. They may also be involved in the modulation of firing patterns of neurons which is important for information processing as well as in cell growth processes. Gates in voltage ranges similar to, but higher than alpha 1G or alpha 1H. In terms of biological role, voltage-sensitive calcium channels (VSCC) mediate the entry of calcium ions into excitable cells and are also involved in a variety of calcium-dependent processes, including muscle contraction, hormone or neurotransmitter release, gene expression, cell motility, cell division and cell death. This channel gives rise to T-type calcium currents. The sequence is that of Voltage-dependent T-type calcium channel subunit alpha-1I (CACNA1I) from Homo sapiens (Human).